The sequence spans 13477 residues: Mucin-3B (13477 aa).

Positions 1–21 (MQLLGLLSILWMLKSSPGATG) are cleaved as a signal peptide. The segment covering 219-234 (TISSTTRTTERTPLPT) has biased composition (low complexity). Disordered stretches follow at residues 219-243 (TISS…TMSP), 327-347 (TRST…TVTD), 360-383 (GTLS…TPMT), 513-559 (SMTT…PSTL), 622-643 (ATTP…STPS), 815-839 (TTTN…TGTG), 923-968 (TSQT…STTE), 1154-1179 (PSMS…TSTL), 1480-1511 (SPTV…STEN), 1529-1601 (SISA…FPET), 1619-1638 (MTST…VTSM), 1692-1714 (TTST…TDSM), 1944-1968 (TTSA…TFTS), 2064-2123 (TPNA…IAKS), 2170-2197 (STSM…SGGI), 2275-2308 (SSSM…AEST), 2442-2462 (RSTP…VKGS), 2476-2497 (LSME…TATT), 2509-2537 (SHST…GPPT), 2591-2610 (SAMS…TETS), 2672-2717 (TSTL…FSSS), 2812-2832 (TTIT…STST), 2845-2867 (TMTE…STTE), 2922-2947 (SRIP…SVGI), 3074-3109 (ETPS…TPDI), 3309-3395 (TTSH…NSNS), 3420-3481 (ITTT…SHST), 3545-3565 (STTS…STPS), 3654-3727 (SITT…STTA), 3740-3812 (ITTI…TTAE), 4014-4047 (TETT…SIAT), 4067-4106 (TSNS…HSTP), 4182-4249 (TTET…SSIT), 4269-4313 (NSTS…PSFT), 4510-4530 (SHST…SHST), 4557-4617 (TETT…STSS), 4630-4651 (YSPS…STPS), 4802-4830 (TSSF…TATG), 4953-4986 (HSLP…KTIS), 5128-5203 (YTSS…ITTT), 5455-5486 (ITNT…PSFT), 5627-5680 (TTKT…ATSK), 5834-5908 (TTSY…HSPP), 5957-5977 (STPS…SSPS), 5990-6017 (HSTA…SSIT), 6030-6080 (TSSI…PPIF), 6120-6150 (TTET…SFTS), 6172-6197 (TEST…HTPP), 6456-6481 (TETP…HSTP), 6541-6598 (TKTT…TSTS), 6846-6867 (TTGT…TKTT), 6946-6971 (ITTT…RTSH), 6999-7021 (TTES…ETRS), 7067-7093 (TTET…HSPP), 7170-7206 (TETA…TTGI), 7225-7244 (SHST…ISHS), 7299-7329 (FTSS…TSHS), 7400-7433 (SYTS…HRTP), 7476-7532 (TETI…TTST), 7578-7600 (TGTS…TTSH), 7731-7766 (TEIT…ATSK), 7922-7996 (SHST…PPIF), 8036-8066 (TTET…SFTS), 8088-8113 (TEST…HTPP), 8372-8397 (TETP…HSTP), 8457-8514 (TKTT…TSTS), 8762-8783 (TTGT…TKTT), 8862-8887 (ITTT…RTSH), 8915-8941 (TTES…HSPP), 8983-9009 (TTET…HSPP), 9052-9122 (AETT…TTGI), 9141-9160 (SHST…ISHS), 9215-9240 (FTSS…TSTE), 9335-9366 (TSSI…HRTP), 9409-9465 (TETI…TTST), 9566-9589 (SHST…NPSL), 9612-9674 (TTET…PPSF), 9734-9760 (TTSH…SSFT), 9828-9859 (TSSI…HSTP), 9883-9908 (TTTE…RSHS), 9921-9973 (TTSH…SKTI), 10076-10099 (SDST…SPSF), 10120-10166 (ITTT…TVPS), 10189-10285 (ITTE…SPLS), 10389-10425 (TSSI…LSSA), 10462-10481 (TTKT…TSTK), 10501-10537 (SHSS…TSTS), 10640-10660 (TTSF…TPSF), 10750-10828 (TTTE…QRSP), 10887-11032 (TTET…SPSS), 11044-11065 (SHST…HSTP), 11276-11317 (TGTE…SPSH), 11446-11482 (STTA…ITTT), 11566-11697 (TTET…PGFS), 11754-11779 (TKTT…HSTP), 11818-11949 (SIAT…HSPP), 12067-12103 (TSSF…STPV), 12186-12220 (PSYT…HSTP), 12280-12323 (TETT…STPI), 12364-12452 (TTET…TTET), 12468-12578 (EMTS…NTPS), 12616-12639 (FTTA…DIPT), 12681-12700 (SSPS…TSPT), 12785-12805 (IPST…LQTS), 12985-13011 (TSSM…TVPT), and 13052-13086 (SLPT…TPTT). 2 stretches are compositionally biased toward low complexity: residues 513-538 (SMTT…LSST) and 547-559 (TSHT…PSTL). Residues 1620 to 1638 (TSTPPITSSVTPTNTVTSM) show a composition bias toward low complexity. Residues 1944 to 1956 (TTSATMEPPSSSV) show a composition bias toward polar residues. The span at 1957 to 1968 (AATDTGQTTFTS) shows a compositional bias: low complexity. Residues 2066–2091 (NASSMTTSETTYPNSPTGPVTNSMSK) show a composition bias toward polar residues. A compositionally biased stretch (low complexity) spans 2096–2107 (ASMTQTSSTATS). A compositionally biased stretch (polar residues) spans 2113–2123 (PSGSTTEIAKS). Over residues 2170–2185 (STSMTPSTVSTSIPTS) the composition is skewed to low complexity. The segment covering 2186–2195 (QPKTVNSSSG) has biased composition (polar residues). 2 stretches are compositionally biased toward low complexity: residues 2292–2308 (SSPP…AEST) and 2442–2458 (RSTP…PTST). Low complexity predominate over residues 2591 to 2603 (SAMSTSDIPSSPS). Low complexity-rich tracts occupy residues 2929–2944 (STDI…TPSS) and 3074–3097 (ETPS…TATS). The segment covering 3098-3109 (PETNTLTPTPDI) has biased composition (polar residues). The span at 3309–3359 (TTSHSTPSFTSPIATTKTSSHSSPSFTSSIATLETTSHSTPSFTSSITTNS) shows a compositional bias: low complexity. Residues 3360–3370 (HSTPRFSSSIA) are compositionally biased toward polar residues. Low complexity predominate over residues 3371–3385 (TRETTSHSTSSFTPS). Over residues 3386–3395 (IATTKTNSNS) the composition is skewed to polar residues. Residues 3420–3452 (ITTTETTSHSTPSFTSSMATTKTTSHSTPSFTS) are compositionally biased toward low complexity. The segment covering 3453-3462 (PIATRETTSH) has biased composition (polar residues). Residues 3463–3481 (STPSFTSLITTTKTTSHST) show a composition bias toward low complexity. The span at 3740-3749 (ITTIETPSHG) shows a compositional bias: polar residues. Positions 3750 to 3785 (TPSFTSSITSTETTSHSSPSFISSITTTEITSHSTP) are enriched in low complexity. The segment covering 3786-3812 (RFTSSITTMETPSHSTPNFTSSITTAE) has biased composition (polar residues). Low complexity-rich tracts occupy residues 4020–4042 (STPS…PSFT) and 4067–4096 (TSNS…SSMT). Polar residues predominate over residues 4097–4106 (ATETTSHSTP). Composition is skewed to low complexity over residues 4182–4228 (TTET…PSFT) and 4237–4249 (TSHS…SSIT). The span at 4557-4574 (TETTSNSSPSFTSSITNT) shows a compositional bias: low complexity. A compositionally biased stretch (polar residues) spans 4575–4601 (KTTSYSPPGFTSSIPATETTSRSPPGF). Low complexity predominate over residues 4602-4617 (TSSITTTETTSHSTSS). Residues 4802–4827 (TSSFTSSITSTETTSHSTPSLTSSIT) are compositionally biased toward low complexity. Over residues 5137-5158 (TPSHITPSFTSTITTSESTSHS) the composition is skewed to low complexity. Polar residues predominate over residues 5159–5170 (NPSLTSAITTTE). Low complexity-rich tracts occupy residues 5174–5203 (HSPP…ITTT) and 5458–5486 (TEST…PSFT). Over residues 5834–5858 (TTSYSTPSITSSITTTERTSHSTPS) the composition is skewed to low complexity. Positions 5859–5874 (YTSSIATRETPSHTVP) are enriched in polar residues. Residues 5875–5889 (SFTSSITTTESTSHS) show a composition bias toward low complexity. Over residues 5890–5901 (NPSLTSAITTTE) the composition is skewed to polar residues. Positions 6045–6059 (SFTSSITTTDSTSHS) are enriched in low complexity. The segment covering 6060–6071 (NPSLTSAITTTE) has biased composition (polar residues). Residues 6172-6185 (TESTSHSTPSFTSS) are compositionally biased toward low complexity. Polar residues predominate over residues 6186–6197 (IATTETTSHTPP). The segment covering 6456-6475 (TETPSHSTPSFPSSITTTQS) has biased composition (low complexity). A compositionally biased stretch (polar residues) spans 6852–6867 (HNTLGLSSSVDTTKTT). Low complexity predominate over residues 6946–6965 (ITTTETTSHSTPSITSSVTT). A compositionally biased stretch (polar residues) spans 6999-7018 (TTESTSHSNPSLTSAITTTE). Residues 7172 to 7206 (TASHSNPSSTSSITTTESTSHSPPRSTSAIATTGI) show a composition bias toward low complexity. Composition is skewed to low complexity over residues 7300–7329 (TSSI…TSHS) and 7400–7427 (SYTS…STET). Positions 7476–7491 (TETISHSPPSFTSLTN) are enriched in polar residues. The span at 7492-7532 (STETTSHSPPSFTSSSTTTETPSHSTPGFSSSIATSKTTST) shows a compositional bias: low complexity. Composition is skewed to low complexity over residues 7734 to 7766 (TSHS…ATSK) and 7922 to 7944 (SHST…STPS). The span at 7945 to 7987 (YTSSIATSETPSHTVPSFTSLITTTDSTSHSNPSLTSAITTTE) shows a compositional bias: polar residues. Residues 8088 to 8101 (TESTSHSTPSFTSS) show a composition bias toward low complexity. Over residues 8102-8113 (IATTETTSHTPP) the composition is skewed to polar residues. Residues 8372–8391 (TETPSHSTPSFPSSITTTQS) show a composition bias toward low complexity. Over residues 8768–8783 (HNTLGLSSSVDTTKTT) the composition is skewed to polar residues. A compositionally biased stretch (low complexity) spans 8862–8881 (ITTTETTSHSTPSITSSVTT). A compositionally biased stretch (polar residues) spans 8915 to 8934 (TTESTSHSNPSLTSAITTTE). Low complexity-rich tracts occupy residues 9067-9081 (PTTE…SFTS) and 9088-9122 (TASH…TTGI). Residues 9335–9360 (TSSITTTETPSHSSPSFPSSITSTET) show a composition bias toward low complexity. Positions 9409–9424 (TETISHSPPSFTSLTN) are enriched in polar residues. Composition is skewed to low complexity over residues 9425 to 9465 (STET…TTST), 9566 to 9585 (SHST…TSHS), and 9612 to 9624 (TTET…PSFT). Over residues 9625 to 9661 (SSIATAETTSHSPPSFTSLITTSETPSHSNPSFTSLI) the composition is skewed to polar residues. The segment covering 9662–9674 (TTTESTSHSPPSF) has biased composition (low complexity). Polar residues-rich tracts occupy residues 9892–9903 (NPSLTSAITNTE) and 9921–9933 (TTSH…TSLI). Low complexity predominate over residues 9934-9973 (TSTETTSHSPPSFTSSSTTTETPSHSTPGFSSSIATSKTI). Positions 10120–10130 (ITTTETTSHST) are enriched in low complexity. A compositionally biased stretch (polar residues) spans 10131–10166 (PNITSSVTTTERTSHSTPSYTSSIATGETPSHTVPS). Low complexity-rich tracts occupy residues 10196–10271 (HSPP…SFTS) and 10394–10421 (TSET…STPS). A compositionally biased stretch (polar residues) spans 10750 to 10791 (TTTETTSHSPPRFTSSITTTKTPSDSTPVFTPSIATSETSSH). Low complexity-rich tracts occupy residues 10792–10828 (STPG…QRSP), 10887–10937 (TTET…SSIT), and 10950–11032 (PSSI…SPSS). Low complexity predominate over residues 11278–11291 (TETTSHSPPHFTSS). The segment covering 11292–11317 (ITRTKTTSHRPPTFTSSITTTESPSH) has biased composition (polar residues). Residues 11566 to 11682 (TTETTSHSIP…SHSTSGFTSS (117 aa)) are compositionally biased toward low complexity. Composition is skewed to polar residues over residues 11683-11697 (NATT…PGFS) and 11754-11769 (TKTT…SSIA). Composition is skewed to low complexity over residues 11770 to 11779 (STKTTSHSTP) and 11818 to 11880 (SIAT…SHST). 2 stretches are compositionally biased toward polar residues: residues 11881 to 11896 (PSFT…TSHS) and 11903 to 11912 (LIPTTKTTLH). Composition is skewed to low complexity over residues 11913-11949 (SPPS…HSPP) and 12067-12091 (TSSF…TSSI). A compositionally biased stretch (polar residues) spans 12092 to 12103 (AVTETPSDSTPV). The span at 12280–12309 (TETTSHSAPNFSSSITSTETTSHSTPSFTS) shows a compositional bias: low complexity. The span at 12310–12323 (AITSTETTSHSTPI) shows a compositional bias: polar residues. Over residues 12364–12412 (TTETTSHSTPGFASSITTTKTTSHSTPSFTSSIATSNTTSSSTPGFTSS) the composition is skewed to low complexity. Positions 12413–12439 (IATTETTSRSTPGFTSSIVTTETTSPH) are enriched in polar residues. The segment covering 12440 to 12452 (TPGFTSSITTTET) has biased composition (low complexity). Over residues 12468–12477 (EMTSHSTPSL) the composition is skewed to polar residues. Low complexity-rich tracts occupy residues 12478–12569 (TFSI…VTTP), 12624–12639 (TSTP…DIPT), 12681–12692 (SSPSIQSTETSS), 12794–12805 (QTTPSIPSLQTS), 12990–13003 (PESE…ASSS), and 13073–13086 (TSET…TPTT). The region spanning 13130–13163 (SGDRCQLQTRCQNGGQWDGLKCQCPSTFYGSSCE) is the EGF-like domain. Intrachain disulfides connect cysteine 13134-cysteine 13140 and cysteine 13153-cysteine 13162. The SEA domain occupies 13172–13297 (DVVETEVGME…DSIKVNNNSK (126 aa)). Residues 13381 to 13401 (LVGGLTAGAALLVLLLLALGV) traverse the membrane as a helical segment.

In terms of processing, highly O-glycosylated and probably also N-glycosylated. As to expression, fetal and adult small intestine and fetal and adult colon.

It is found in the membrane. Functionally, major glycoprotein component of a variety of mucus gels. Thought to provide a protective, lubricating barrier against particles and infectious agents at mucosal surfaces. This is Mucin-3B from Homo sapiens (Human).